A 112-amino-acid polypeptide reads, in one-letter code: Ferredoxin, plant-type (112 aa).

The 2Fe-2S ferredoxin-type domain maps to tyrosine 6–valine 97. Residues cysteine 41, cysteine 46, cysteine 49, and cysteine 81 each coordinate [2Fe-2S] cluster.

The protein belongs to the 2Fe2S plant-type ferredoxin family.

Its pathway is aromatic compound metabolism; catechol degradation. Functionally, ferredoxins are iron-sulfur proteins that transfer electrons in a wide variety of metabolic reactions. In Pseudomonas putida (Arthrobacter siderocapsulatus), this protein is Ferredoxin, plant-type (xylT).